The primary structure comprises 392 residues: Pannexin-3 (392 aa).

The Cytoplasmic portion of the chain corresponds to 1–39 (MSLAHTAAEYMLSDALLPDRRGSRLKGLRLELPLDKMVK). A helical transmembrane segment spans residues 40 to 60 (FITVGFPLLLMSLAFAQEFSS). The Extracellular portion of the chain corresponds to 61-113 (GSPISCFSPSNFSVRQAAYVDSSCWDSLAHHTQDKAGQYKVKSLWPHKALPYS). An N-linked (GlcNAc...) asparagine glycan is attached at asparagine 71. Residues 114–134 (LLALAVAMYLPVLLWQYVAVP) form a helical membrane-spanning segment. At 135-215 (SLSSDLLFII…VATYLLRNAL (81 aa)) the chain is on the cytoplasmic side. Residues 216–236 (LLLFTSATYLYLGQFHLDVFF) traverse the membrane as a helical segment. Topologically, residues 237-267 (QDEFNCFIKTGLLHDETHVPELITCRLTSLS) are extracellular. The chain crosses the membrane as a helical span at residues 268-288 (VFQIVSVSSAAIYTILVPVII). Topologically, residues 289–392 (YNLTRLCRWD…LTQHTYDEHA (104 aa)) are cytoplasmic.

The protein belongs to the pannexin family. As to quaternary structure, homoheptameric. N-glycosylation may play a role in cell surface targeting. As to expression, expressed in skin, cartilage, heart, lung, liver, spleen, thymus and kidney. Not expressed in brain. Expressed in calvarial cells.

Its subcellular location is the cell membrane. The protein localises to the endoplasmic reticulum membrane. It carries out the reaction Ca(2+)(in) = Ca(2+)(out). It catalyses the reaction ATP(in) = ATP(out). Regulator of osteoblast differentiation by functionning as a Ca(2+) channel in the endoplasmic reticulum which regulates calmodulin (CaM) pathways. Allows ATP release into the extracellular space and activation or purinergic receptors. The chain is Pannexin-3 (Panx3) from Mus musculus (Mouse).